Reading from the N-terminus, the 1127-residue chain is Glutamate receptor-interacting protein 1 (1127 aa).

Gln11 carries the S-palmitoyl cysteine lipid modification. Ser43 carries the post-translational modification Phosphoserine. PDZ domains are found at residues Val53–Leu136, Thr150–Val238, Leu252–His336, Glu471–Val560, His572–Glu657, and Thr672–Thr754. 3 disordered regions span residues Lys752–Asp802, Lys840–Asp865, and Met942–Ser980. Polar residues-rich tracts occupy residues Lys840 to Tyr856 and Leu947 to Pro973. The PDZ 7 domain occupies Lys1003–Pro1085. Residues Phe1108–Leu1127 form a disordered region.

As to quaternary structure, interacts with EFNB3, GRIA2, GRIA3, GRIPAP1/GRASP1, PPFIA1, PPFIA4, FRAS1, PTPRF, liprins-alpha and the C-terminal tail of PRLHR. Can form homomultimers or heteromultimers with GRIP2. Interacts with EFNB1, EPHA7, EPHB2, KIF5A, KIF5B and KIF5C. Forms a ternary complex with GRIA2 and CSPG4. Interacts with ATAD1 in an ATP-dependent manner. ATAD1-catalyzed ATP hydrolysis disrupts binding to ATAD1 and to GRIA2 and leads to AMPAR complex disassembly. Interacts with SLC30A9 and PLCD4. Interacts with BUD23. Forms a complex with NSG1, GRIA2 and STX12; controls the intracellular fate of AMPAR and the endosomal sorting of the GRIA2 subunit toward recycling and membrane targeting. Interacts with NSG1. Post-translationally, palmitoylation of isoform 2. Expressed in brain. Isoform 2 is the major isoform in brain. Expressed in oligodendrocyte lineage cells.

The protein resides in the membrane. The protein localises to the cytoplasmic vesicle. Its subcellular location is the perikaryon. It is found in the cell projection. It localises to the dendrite. The protein resides in the cytoplasm. The protein localises to the endomembrane system. Its subcellular location is the postsynaptic cell membrane. It is found in the postsynaptic density. It localises to the endoplasmic reticulum membrane. May play a role as a localized scaffold for the assembly of a multiprotein signaling complex and as mediator of the trafficking of its binding partners at specific subcellular location in neurons. Through complex formation with NSG1, GRIA2 and STX12 controls the intracellular fate of AMPAR and the endosomal sorting of the GRIA2 subunit toward recycling and membrane targeting. This is Glutamate receptor-interacting protein 1 (Grip1) from Mus musculus (Mouse).